A 232-amino-acid chain; its full sequence is Orotidine 5'-phosphate decarboxylase (232 aa).

Substrate contacts are provided by residues aspartate 11, lysine 33, 60–69, threonine 120, arginine 181, glutamine 190, glycine 210, and arginine 211; that span reads DLKFHDIPNT. The active-site Proton donor is the lysine 62.

Belongs to the OMP decarboxylase family. Type 1 subfamily. In terms of assembly, homodimer.

The catalysed reaction is orotidine 5'-phosphate + H(+) = UMP + CO2. It participates in pyrimidine metabolism; UMP biosynthesis via de novo pathway; UMP from orotate: step 2/2. In terms of biological role, catalyzes the decarboxylation of orotidine 5'-monophosphate (OMP) to uridine 5'-monophosphate (UMP). This is Orotidine 5'-phosphate decarboxylase from Vibrio vulnificus (strain YJ016).